Here is a 296-residue protein sequence, read N- to C-terminus: NAD kinase (296 aa).

The active-site Proton acceptor is D72. Residues 72 to 73 (DG), 146 to 147 (ND), R157, K174, D176, 187 to 192 (TAYALS), and Q247 each bind NAD(+).

It belongs to the NAD kinase family. The cofactor is a divalent metal cation.

It is found in the cytoplasm. The enzyme catalyses NAD(+) + ATP = ADP + NADP(+) + H(+). Involved in the regulation of the intracellular balance of NAD and NADP, and is a key enzyme in the biosynthesis of NADP. Catalyzes specifically the phosphorylation on 2'-hydroxyl of the adenosine moiety of NAD to yield NADP. This is NAD kinase from Pseudomonas putida (strain GB-1).